The sequence spans 430 residues: Phosphomethylpyrimidine synthase (430 aa).

Residues N67, M96, Y125, H161, 183–185 (SRG), 224–227 (DALR), and E263 each bind substrate. H267 provides a ligand contact to Zn(2+). Position 290 (Y290) interacts with substrate. H331 contributes to the Zn(2+) binding site. C406, C409, and C413 together coordinate [4Fe-4S] cluster.

The protein belongs to the ThiC family. In terms of assembly, homodimer. The cofactor is [4Fe-4S] cluster.

The catalysed reaction is 5-amino-1-(5-phospho-beta-D-ribosyl)imidazole + S-adenosyl-L-methionine = 4-amino-2-methyl-5-(phosphooxymethyl)pyrimidine + CO + 5'-deoxyadenosine + formate + L-methionine + 3 H(+). It functions in the pathway cofactor biosynthesis; thiamine diphosphate biosynthesis. Functionally, catalyzes the synthesis of the hydroxymethylpyrimidine phosphate (HMP-P) moiety of thiamine from aminoimidazole ribotide (AIR) in a radical S-adenosyl-L-methionine (SAM)-dependent reaction. This Campylobacter jejuni subsp. jejuni serotype O:2 (strain ATCC 700819 / NCTC 11168) protein is Phosphomethylpyrimidine synthase.